A 399-amino-acid chain; its full sequence is Nuclear hormone receptor family member nhr-125 (399 aa).

The segment at residues 10–80 (PFSCRICNQK…MGMDTTKFQY (71 aa)) is a DNA-binding region (nuclear receptor). NR C4-type zinc fingers lie at residues 13-33 (CRIC…CRAC) and 50-63 (CQKG…CKRC). The NR LBD domain maps to 149 to 392 (QLENLTEGFK…EKLQKSQFSI (244 aa)).

The protein belongs to the nuclear hormone receptor family.

The protein resides in the nucleus. In terms of biological role, orphan nuclear receptor. The protein is Nuclear hormone receptor family member nhr-125 (nhr-125) of Caenorhabditis elegans.